The chain runs to 702 residues: DNA ligase (702 aa).

NAD(+) is bound by residues 32-36 and 81-82; these read DAEYD and SL. The tract at residues 104–125 is disordered; it reads AESSAQKASLNPLVRDSDQKNR. Glutamate 139 contacts NAD(+). The active-site N6-AMP-lysine intermediate is lysine 141. Arginine 162, glutamate 199, lysine 316, and lysine 340 together coordinate NAD(+). Positions 434, 437, 452, and 458 each coordinate Zn(2+). A BRCT domain is found at 616-702; sequence KPNHPFRDKT…KALKPEGTKV (87 aa).

The protein belongs to the NAD-dependent DNA ligase family. LigA subfamily. Requires Mg(2+) as cofactor. Mn(2+) is required as a cofactor.

The enzyme catalyses NAD(+) + (deoxyribonucleotide)n-3'-hydroxyl + 5'-phospho-(deoxyribonucleotide)m = (deoxyribonucleotide)n+m + AMP + beta-nicotinamide D-nucleotide.. Its function is as follows. DNA ligase that catalyzes the formation of phosphodiester linkages between 5'-phosphoryl and 3'-hydroxyl groups in double-stranded DNA using NAD as a coenzyme and as the energy source for the reaction. It is essential for DNA replication and repair of damaged DNA. The polypeptide is DNA ligase (Hamiltonella defensa subsp. Acyrthosiphon pisum (strain 5AT)).